Reading from the N-terminus, the 885-residue chain is Conidiophore development regulator abaA (885 aa).

A compositionally biased stretch (polar residues) spans 1 to 20 (MSSLFQPRPVLSSQRYSQSP). The disordered stretch occupies residues 1 to 25 (MSSLFQPRPVLSSQRYSQSPDYVDT). Residues 124–217 (QKDKGGVWRR…QVVKKFFEDL (94 aa)) constitute a DNA-binding region (TEA). Disordered regions lie at residues 502–539 (KEKR…WTRR) and 817–885 (APGS…TAGW). Composition is skewed to basic and acidic residues over residues 508–521 (YADG…ERAG) and 831–840 (VESHAGDHHG).

The protein belongs to the TEC1 family.

Its subcellular location is the nucleus. Functionally, brlA, abaA and wetA are pivotal regulators of conidiophore development and conidium maturation. They act individually and together to regulate their own expression and that of numerous other sporulation-specific genes. BrlA, abaA and wetA act together to positively regulate the expression of the Pks1 gene cluster that mediates the biosynthesis of an anthraquinone derivative pigment that contributes to conidial pigmentation that provides protection from UV radiation, heat and cold stress. The chain is Conidiophore development regulator abaA from Metarhizium robertsii (strain ARSEF 23 / ATCC MYA-3075) (Metarhizium anisopliae (strain ARSEF 23)).